The chain runs to 74 residues: Kappa-stichotoxin-Shd5a (74 aa).

An N-terminal signal peptide occupies residues 1 to 22 (MKFQVIAAVLLIAFCLCVVVTA). A propeptide spanning residues 23 to 39 (RMELQDVEDVENGFQKR) is cleaved from the precursor. The ShKT domain occupies 42 to 74 (CIDTIPQSRCTAFQCKHSMKYRLSFCRKTCGTC). Intrachain disulfides connect C42–C74, C51–C67, and C56–C71.

The protein belongs to the sea anemone type 1 potassium channel toxin family. Type 1a subfamily.

Its subcellular location is the secreted. The protein localises to the nematocyst. Functionally, inhibits voltage-gated potassium channels (Kv) with higher potency for Kv1.1/KCNA1 and Kv1.3/KCNA3. The protein is Kappa-stichotoxin-Shd5a of Stichodactyla haddoni (Saddle carpet anemone).